A 661-amino-acid chain; its full sequence is MISSELTNDQIIDLISDYKNFKRIIEASVPEDDRRRNQNRQNRNKDLTKLSNVQFWQLTTDVNDELMKRLTDSGADASLNDLDLKRGKAQSKLSRLKDAKFHKLILDIFTEIERRNLHHLDMGTHNNGLDEGDLNFYLNDTLFESFKINDDFMSVNGIISIEVFRELKTQFTLYFQNTLHRIDPVDTTTTRLPILLETIIKIAKLIGDLLPVLSSVSLQSSLENEIVYLKSALSHAITSTRYFLTYGDLIPRIVAQSSISEVIFAFCNIAQIVKIKSTSRDDISRNEGELSDIEAGMKPLKIIEKVKNEKNGKDISSLGDSGSTAVSFPSSGKPITKKSDMPVVVASPSISIIEKSESSIRESGKVRNNTSGETNLASVSPLKNTKNSSRITSEPSPREGLPLKVVSNSRSPSPQGNTLPLIGKFRQDYQASPPKKVITKPVAETAKPYANIPPAADVLYSPTVTKMRKFREKVQKFAPNSGLGLRISTSEENLNNSDVNSTTHNANINNLVEFVESKSMVVLPMAQGILNDVQASKSKLFKSARSVSRLCQNSIEIIPILESVIDMTTKAMVQKSFKLDLGEHCKEIIERLTDCSQKLSELCTYGCDSTKLGKKRFYQKLADILMEVTKRTRELVECVKMANRQTLSQDLSSFFNYRSVQ.

Disordered stretches follow at residues 313–340 (KDISSLGDSGSTAVSFPSSGKPITKKSD) and 356–418 (SESS…QGNT). Residues 318–330 (LGDSGSTAVSFPS) show a composition bias toward polar residues. Residues 356-365 (SESSIRESGK) show a composition bias toward basic and acidic residues. 2 stretches are compositionally biased toward polar residues: residues 366-395 (VRNNTSGETNLASVSPLKNTKNSSRITSEP) and 406-418 (VSNSRSPSPQGNT).

In terms of assembly, conjugated with HUB1. HUB1 has not the classical C-terminal Gly residue, so it is still unknown how conjugation may occur.

The protein localises to the bud tip. It localises to the bud neck. It is found in the cytoplasm. The protein resides in the cytoskeleton. In terms of biological role, polarity-determining protein which forms a conjugate with the ubiquitin-like modifier HUB1. Involved in bud site selection and cellular morphogenesis during conjugation. Required for pseudohyphal growth. The sequence is that of Protein SPH1 (SPH1) from Saccharomyces cerevisiae (strain ATCC 204508 / S288c) (Baker's yeast).